A 459-amino-acid polypeptide reads, in one-letter code: Glycosyl hydrolase family 109 protein 1 (459 aa).

A signal peptide (tat-type signal) is located at residues 1–31 (MHNIHRRHFLKAAGAVTAGLVTANIALNANA). NAD(+) contacts are provided by residues 64 to 65 (ER), Asp86, 135 to 138 (WEWH), 155 to 156 (EV), and Asn184. Substrate-binding positions include Tyr213, Arg232, 244 to 247 (YPTH), and Tyr326. Tyr244 contributes to the NAD(+) binding site.

Belongs to the Gfo/Idh/MocA family. Glycosyl hydrolase 109 subfamily. NAD(+) serves as cofactor. In terms of processing, predicted to be exported by the Tat system. The position of the signal peptide cleavage has not been experimentally proven.

In terms of biological role, glycosidase. This is Glycosyl hydrolase family 109 protein 1 from Shewanella sp. (strain ANA-3).